Reading from the N-terminus, the 317-residue chain is Mitochondrial outer membrane protein porin 4 (317 aa).

Residues 1-30 (MEAETECKVPGVYSETGIPVEDPAPGLNSD) form a disordered region.

Belongs to the eukaryotic mitochondrial porin (TC 1.B.8.1) family.

The protein resides in the mitochondrion outer membrane. Its function is as follows. Forms a channel through the mitochondrial outer membrane that allows diffusion of small hydrophilic molecules. The channel adopts an open conformation at low or zero membrane potential and a closed conformation at potentials above 30-40 mV. The open state has a weak anion selectivity whereas the closed state is cation-selective. The sequence is that of Mitochondrial outer membrane protein porin 4 (VDAC4) from Oryza sativa subsp. japonica (Rice).